The following is a 565-amino-acid chain: Thiol:disulfide interchange protein DsbD (565 aa).

Positions 1–19 are cleaved as a signal peptide; sequence MAQRIFTLILLLCSTSVFA. Intrachain disulfides connect Cys122/Cys128 and Cys182/Cys304. 7 helical membrane passes run 163 to 183, 208 to 228, 243 to 263, 296 to 316, 323 to 343, 357 to 377, and 384 to 404; these read LPFS…TPCV, LLTF…GLVV, YVLI…FGLF, IAGL…LLYI, WLGG…LMLI, WMEQ…VFLL, and VWGL…AFIT. The 132-residue stretch at 434-565 folds into the Thioredoxin domain; that stretch reads WAFGATHTAQ…FSAHLRDRQP (132 aa). Cys480 and Cys483 are oxidised to a cystine.

It belongs to the thioredoxin family. DsbD subfamily.

The protein localises to the cell inner membrane. It carries out the reaction [protein]-dithiol + NAD(+) = [protein]-disulfide + NADH + H(+). The catalysed reaction is [protein]-dithiol + NADP(+) = [protein]-disulfide + NADPH + H(+). Its function is as follows. Required to facilitate the formation of correct disulfide bonds in some periplasmic proteins and for the assembly of the periplasmic c-type cytochromes. Acts by transferring electrons from cytoplasmic thioredoxin to the periplasm. This transfer involves a cascade of disulfide bond formation and reduction steps. The chain is Thiol:disulfide interchange protein DsbD from Shigella boydii serotype 4 (strain Sb227).